The sequence spans 1482 residues: Chromosome partition protein MukB (1482 aa).

34–41 (GGNGAGKS) is an ATP binding site. Coiled coils occupy residues 326–472 (LEAD…QTAH), 507–602 (NQRH…RRAP), 780–805 (RAAR…ATLS), 832–1110 (DDPE…REQV), and 1209–1265 (VEAI…LQSV). Residues 666 to 783 (PGGSEDPRLN…SLPLFGRAAR (118 aa)) are flexible hinge.

The protein belongs to the SMC family. MukB subfamily. As to quaternary structure, homodimerization via its hinge domain. Binds to DNA via its C-terminal region. Interacts, and probably forms a ternary complex, with MukE and MukF via its C-terminal region. The complex formation is stimulated by calcium or magnesium. Interacts with tubulin-related protein FtsZ.

Its subcellular location is the cytoplasm. The protein resides in the nucleoid. In terms of biological role, plays a central role in chromosome condensation, segregation and cell cycle progression. Functions as a homodimer, which is essential for chromosome partition. Involved in negative DNA supercoiling in vivo, and by this means organize and compact chromosomes. May achieve or facilitate chromosome segregation by condensation DNA from both sides of a centrally located replisome during cell division. The polypeptide is Chromosome partition protein MukB (Klebsiella pneumoniae subsp. pneumoniae (strain ATCC 700721 / MGH 78578)).